The primary structure comprises 517 residues: GMP synthase [glutamine-hydrolyzing] (517 aa).

The Glutamine amidotransferase type-1 domain maps to Lys9–Asp202. Cys86 functions as the Nucleophile in the catalytic mechanism. Active-site residues include His176 and Glu178. A GMPS ATP-PPase domain is found at Trp203–Arg392. An ATP-binding site is contributed by Ser230 to Ser236.

Homodimer.

It catalyses the reaction XMP + L-glutamine + ATP + H2O = GMP + L-glutamate + AMP + diphosphate + 2 H(+). Its pathway is purine metabolism; GMP biosynthesis; GMP from XMP (L-Gln route): step 1/1. In terms of biological role, catalyzes the synthesis of GMP from XMP. The chain is GMP synthase [glutamine-hydrolyzing] from Streptococcus mutans serotype c (strain ATCC 700610 / UA159).